The primary structure comprises 1082 residues: RhoGEF domain-containing protein gxcI (1082 aa).

The span at 1-15 (MRKNSTSNPSPSHQF) shows a compositional bias: polar residues. Disordered stretches follow at residues 1-29 (MRKNSTSNPSPSHQFLTPPKNTTTVVNNN), 59-78 (DKNQQQQQQQQQQTHQVLPQ), 91-394 (YNEQ…VTSL), 438-488 (KQAS…SVSN), and 504-524 (INSFNSDDSNNSNNSNSSLSL). Low complexity-rich tracts occupy residues 20 to 29 (KNTTTVVNNN), 62 to 71 (QQQQQQQQQQ), 96 to 109 (PSSSSSTASSSSSP), 116 to 160 (LLST…SGSP), and 170 to 184 (PTILSPLPSPRRQLP). The segment covering 185 to 206 (TRPPSPLPKLPSRPTSPVPPNP) has biased composition (pro residues). Over residues 211–244 (NTTTTNNNNNNNNNNNNNNNNNNNNNNNNNNNNN) the composition is skewed to low complexity. Residues 262-276 (PIPPPNDKPAPPPRP) show a composition bias toward pro residues. Low complexity predominate over residues 282 to 366 (TLTTPPTIAT…NNNNNSNNNK (85 aa)). Residues 367-379 (PLPPTSTKPPRPK) are compositionally biased toward pro residues. A compositionally biased stretch (low complexity) spans 450–473 (SSLSLSTTPTSVSPSTPSSANPTP). One can recognise a DH domain in the interval 622-817 (SFNKVIKEII…EKIVNDINGK (196 aa)). Residues 838 to 994 (QQLRDQTFLK…NDIDEAINIL (157 aa)) form a PH-like region. Disordered stretches follow at residues 920 to 961 (NNNN…NSTP) and 1017 to 1060 (NNNN…NSNN).

GTPase-activating protein. This Dictyostelium discoideum (Social amoeba) protein is RhoGEF domain-containing protein gxcI (gxcI).